The chain runs to 598 residues: Fumarate reductase flavoprotein subunit (598 aa).

Residues 12–16, 36–38, 44–52, 156–158, and Asp-212 each bind FAD; these read GAGGA, ISK, SHTVAAEGG, and HFV. Position 45 is a tele-8alpha-FAD histidine (His-45). Catalysis depends on residues His-233 and Arg-249. FAD contacts are provided by residues 356–357, Glu-380, and 391–397; these read HY and RLGSNSL. The tract at residues 577–598 is disordered; sequence AKRVYGGEATAQDKQNKEKANG.

This sequence belongs to the FAD-dependent oxidoreductase 2 family. FRD/SDH subfamily. In terms of assembly, part of an enzyme complex containing four subunits: a flavoprotein (FrdA), an iron-sulfur protein (FrdB), and two hydrophobic anchor proteins (FrdC and FrdD). FAD is required as a cofactor.

The protein localises to the cell inner membrane. The catalysed reaction is a quinone + succinate = fumarate + a quinol. It carries out the reaction a menaquinone + succinate = a menaquinol + fumarate. Its function is as follows. Two distinct, membrane-bound, FAD-containing enzymes are responsible for the catalysis of fumarate and succinate interconversion; the fumarate reductase is used in anaerobic growth, and the succinate dehydrogenase is used in aerobic growth. This chain is Fumarate reductase flavoprotein subunit (frdA), found in Proteus vulgaris.